A 124-amino-acid chain; its full sequence is Large ribosomal subunit protein bL12 (124 aa).

Belongs to the bacterial ribosomal protein bL12 family. As to quaternary structure, homodimer. Part of the ribosomal stalk of the 50S ribosomal subunit. Forms a multimeric L10(L12)X complex, where L10 forms an elongated spine to which 2 to 4 L12 dimers bind in a sequential fashion. Binds GTP-bound translation factors.

Forms part of the ribosomal stalk which helps the ribosome interact with GTP-bound translation factors. Is thus essential for accurate translation. This is Large ribosomal subunit protein bL12 from Idiomarina loihiensis (strain ATCC BAA-735 / DSM 15497 / L2-TR).